Consider the following 195-residue polypeptide: Ras-related protein Rab-31 (195 aa).

Positions 16, 18, 19, 20, 21, 32, and 33 each coordinate GTP. Position 20 (S20) interacts with Mg(2+). Short sequence motifs (switch) lie at residues 30–42 and 63–79; these read HFDH…IGAS and AGQE…YRGS. Residue S36 is modified to Phosphoserine. GTP contacts are provided by T38, G64, N119, D122, A150, and K151. Residue T38 participates in Mg(2+) binding. 2 S-geranylgeranyl cysteine lipidation sites follow: C194 and C195.

The protein belongs to the small GTPase superfamily. Rab family. In terms of assembly, interacts with OCRL. Interacts with NGFR. Interacts (in GDP-bound form) with RIN3 and GAPVD1, which function as guanine exchange factors (GEF). Interacts (in GTP-bound form) with EEA1. Interacts with EGFR. Interacts (in GTP-bound form) with APPL2; interaction contributes to or enhances recruitment of APPL2 to the phagosomes; interaction enhances Fc-gamma receptor-mediated phagocytosis through PI3K/Akt signaling in macrophages. Mg(2+) serves as cofactor. Highest expression in placenta and brain with lower levels in heart and lung. Not detected in liver, skeletal muscle, kidney or pancreas.

It is found in the golgi apparatus. Its subcellular location is the trans-Golgi network. The protein localises to the trans-Golgi network membrane. It localises to the early endosome. The protein resides in the cytoplasmic vesicle. It is found in the phagosome. Its subcellular location is the phagosome membrane. It carries out the reaction GTP + H2O = GDP + phosphate + H(+). Regulated by guanine nucleotide exchange factors (GEFs) including RIN3 and GAPVD1 which promote the exchange of bound GDP for free GTP. Regulated by GTPase activating proteins (GAPs) which increase the GTP hydrolysis activity. Inhibited by GDP dissociation inhibitors (GDIs) which prevent Rab-GDP dissociation. Functionally, the small GTPases Rab are key regulators of intracellular membrane trafficking, from the formation of transport vesicles to their fusion with membranes. Rabs cycle between an inactive GDP-bound form and an active GTP-bound form that is able to recruit to membranes different set of downstream effectors directly responsible for vesicle formation, movement, tethering and fusion. Required for the integrity and for normal function of the Golgi apparatus and the trans-Golgi network. Plays a role in insulin-stimulated translocation of GLUT4 to the cell membrane. Plays a role in M6PR transport from the trans-Golgi network to endosomes. Plays a role in the internalization of EGFR from the cell membrane into endosomes. Plays a role in the maturation of phagosomes that engulf pathogens, such as S.aureus and M.tuberculosis. This Homo sapiens (Human) protein is Ras-related protein Rab-31.